A 547-amino-acid polypeptide reads, in one-letter code: RNA polymerase sigma factor sigF, chloroplastic (547 aa).

Positions 1-17 (MEATRNLVSSSPSFQTK) are enriched in polar residues. Disordered stretches follow at residues 1–28 (MEAT…SSPS) and 54–79 (FPAS…DDRT). The N-terminal 55 residues, 1-55 (MEATRNLVSSSPSFQTKTHLKSSYSSPSSVVMLHDQTTTPVVNSRHLNSLSRHFP), are a transit peptide targeting the chloroplast. Residues 62-79 (EPREESRPLSHALRDDRT) show a composition bias toward basic and acidic residues. Phosphoserine; by CK2 occurs at positions 94, 95, 174, 176, 177, and 180. The disordered stretch occupies residues 163–226 (ANPSDNIKDS…QKTSAKKKYK (64 aa)). Positions 172-181 (SLSTSSSMSL) are enriched in low complexity. Thr-249 carries the phosphothreonine; by CK2 modification. Positions 335-348 (DLLQEGSMGLMKSV) match the Polymerase core binding motif. A DNA-binding region (H-T-H motif) is located at residues 505–524 (LSEIGEIYGLSKERVRQLES).

Belongs to the sigma-70 factor family. As to quaternary structure, interacts (via N-terminus) with DG1 (via C-terminus). Phosphorylated to acquire sigma activity; site-specific phosphorylation regulates promoter affinity. Phosphorylation at Ser-174 by chloroplastic CK2 requires prior phosphorylation at Ser-177. Phosphorylation at either Ser-94, Ser-95 or Ser-174 is required for sigma activation. In terms of tissue distribution, expressed in seedling, accumulating progressively. Present in leaves but not in roots.

The protein resides in the plastid. It is found in the chloroplast. In terms of biological role, sigma factors are initiation factors that promote the attachment of plastid-encoded RNA polymerase (PEP) to specific initiation sites and are then released. Regulates transcription in chloroplast in a DG1-dependent manner. Involved in light-dependent chloroplast development. Required during early plant development and primary leaf formation. This chain is RNA polymerase sigma factor sigF, chloroplastic (SIGF), found in Arabidopsis thaliana (Mouse-ear cress).